Reading from the N-terminus, the 431-residue chain is Tyrosine--tRNA ligase (431 aa).

Residue Tyr33 participates in L-tyrosine binding. Positions 38–47 match the 'HIGH' region motif; the sequence is PTADSLHIGS. L-tyrosine-binding residues include Tyr172 and Gln176. The 'KMSKS' region signature appears at 234 to 238; that stretch reads KFGKS. Position 237 (Lys237) interacts with ATP. The region spanning 364 to 431 is the S4 RNA-binding domain; the sequence is INIVEVLNEK…KKNYFVLNVK (68 aa).

Belongs to the class-I aminoacyl-tRNA synthetase family. TyrS type 1 subfamily. As to quaternary structure, homodimer.

Its subcellular location is the cytoplasm. The catalysed reaction is tRNA(Tyr) + L-tyrosine + ATP = L-tyrosyl-tRNA(Tyr) + AMP + diphosphate + H(+). Catalyzes the attachment of tyrosine to tRNA(Tyr) in a two-step reaction: tyrosine is first activated by ATP to form Tyr-AMP and then transferred to the acceptor end of tRNA(Tyr). This is Tyrosine--tRNA ligase from Flavobacterium psychrophilum (strain ATCC 49511 / DSM 21280 / CIP 103535 / JIP02/86).